The sequence spans 352 residues: N-acetyl-gamma-glutamyl-phosphate reductase 1 (352 aa).

It belongs to the NAGSA dehydrogenase family. Type 1 subfamily.

It localises to the cytoplasm. The enzyme catalyses N-acetyl-L-glutamate 5-semialdehyde + phosphate + NADP(+) = N-acetyl-L-glutamyl 5-phosphate + NADPH + H(+). It participates in amino-acid biosynthesis; L-arginine biosynthesis; N(2)-acetyl-L-ornithine from L-glutamate: step 3/4. Catalyzes the NADPH-dependent reduction of N-acetyl-5-glutamyl phosphate to yield N-acetyl-L-glutamate 5-semialdehyde. The polypeptide is N-acetyl-gamma-glutamyl-phosphate reductase 1 (Nostoc sp. (strain PCC 7120 / SAG 25.82 / UTEX 2576)).